The chain runs to 267 residues: Neutrophil elastase (267 aa).

Positions 1–27 (MTLGRRLACLFLACVLPALLLGGTALA) are cleaved as a signal peptide. Positions 28–29 (SE) are excised as a propeptide. Residues 30 to 247 (IVGGRRARPH…FVNWIDSIIQ (218 aa)) form the Peptidase S1 domain. Cysteines 55 and 71 form a disulfide. Catalysis depends on H70, which acts as the Charge relay system. N-linked (GlcNAc...) asparagine glycosylation occurs at N88. The Charge relay system role is filled by D117. Residues N124 and N173 are each glycosylated (N-linked (GlcNAc...) asparagine). Cystine bridges form between C151-C208, C181-C187, and C198-C223. S202 (charge relay system) is an active-site residue.

It belongs to the peptidase S1 family. Elastase subfamily. Interacts with NOTCH2NL. Interacts with agaphelin, an antihemostatic protein from Anopheles gambiae. Bone marrow cells. Neutrophil.

Its subcellular location is the cytoplasmic vesicle. It is found in the phagosome. It carries out the reaction Hydrolysis of proteins, including elastin. Preferential cleavage: Val-|-Xaa &gt; Ala-|-Xaa.. In terms of biological role, serine protease that modifies the functions of natural killer cells, monocytes and granulocytes. Inhibits C5a-dependent neutrophil enzyme release and chemotaxis. Promotes cleavage of GSDMB, thereby inhibiting pyroptosis. Promotes blood coagulation. Through the activation of the platelet fibrinogen receptor integrin alpha-IIb/beta-3, potentiates platelet aggregation induced by a threshold concentration of cathepsin G (CTSG). Cleaves and thus inactivates tissue factor pathway inhibitor (TFPI). Capable of killing E.coli but not S.aureus in vitro; digests outer membrane protein A (ompA) in E.coli and K.pneumoniae. The protein is Neutrophil elastase (ELANE) of Homo sapiens (Human).